The following is a 304-amino-acid chain: Proline dehydrogenase 2 (304 aa).

Lys-97 is a binding site for substrate. Residue Asp-131 is part of the active site. Met-132 and Gln-160 together coordinate FAD. Arg-181 is a catalytic residue. Residues 184–186 (KGA) and 223–224 (TH) each bind FAD. 285-286 (RR) is a substrate binding site.

The protein belongs to the proline dehydrogenase family. The cofactor is FAD.

It catalyses the reaction L-proline + a quinone = (S)-1-pyrroline-5-carboxylate + a quinol + H(+). It participates in amino-acid degradation; L-proline degradation into L-glutamate; L-glutamate from L-proline: step 1/2. Converts proline to delta-1-pyrroline-5-carboxylate. This chain is Proline dehydrogenase 2, found in Bacillus subtilis subsp. natto.